A 415-amino-acid chain; its full sequence is Serine hydroxymethyltransferase (415 aa).

Residues Leu119 and 123-125 (GHL) contribute to the (6S)-5,6,7,8-tetrahydrofolate site. Lys228 carries the N6-(pyridoxal phosphate)lysine modification. 353–355 (SPF) contacts (6S)-5,6,7,8-tetrahydrofolate.

Belongs to the SHMT family. In terms of assembly, homodimer. It depends on pyridoxal 5'-phosphate as a cofactor.

It is found in the cytoplasm. The catalysed reaction is (6R)-5,10-methylene-5,6,7,8-tetrahydrofolate + glycine + H2O = (6S)-5,6,7,8-tetrahydrofolate + L-serine. It participates in one-carbon metabolism; tetrahydrofolate interconversion. It functions in the pathway amino-acid biosynthesis; glycine biosynthesis; glycine from L-serine: step 1/1. Functionally, catalyzes the reversible interconversion of serine and glycine with tetrahydrofolate (THF) serving as the one-carbon carrier. Also exhibits THF-independent aldolase activity toward beta-hydroxyamino acids, producing glycine and aldehydes, via a retro-aldol mechanism. The polypeptide is Serine hydroxymethyltransferase (Halorubrum lacusprofundi (strain ATCC 49239 / DSM 5036 / JCM 8891 / ACAM 34)).